Reading from the N-terminus, the 467-residue chain is UDP-N-acetylmuramate--L-alanine ligase (467 aa).

114-120 (GTHGKTT) lines the ATP pocket.

This sequence belongs to the MurCDEF family.

The protein resides in the cytoplasm. It catalyses the reaction UDP-N-acetyl-alpha-D-muramate + L-alanine + ATP = UDP-N-acetyl-alpha-D-muramoyl-L-alanine + ADP + phosphate + H(+). It functions in the pathway cell wall biogenesis; peptidoglycan biosynthesis. Cell wall formation. In Bradyrhizobium sp. (strain BTAi1 / ATCC BAA-1182), this protein is UDP-N-acetylmuramate--L-alanine ligase.